Consider the following 206-residue polypeptide: 2,3-bisphosphoglycerate-dependent phosphoglycerate mutase (206 aa).

Substrate contacts are provided by residues 9–16 (RHGQSEWN), 22–23 (TG), Arg61, 88–91 (ERDY), Lys99, 115–116 (RR), and 159–160 (GN). Catalysis depends on His10, which acts as the Tele-phosphohistidine intermediate. The active-site Proton donor/acceptor is the Glu88.

It belongs to the phosphoglycerate mutase family. BPG-dependent PGAM subfamily. Homodimer.

It catalyses the reaction (2R)-2-phosphoglycerate = (2R)-3-phosphoglycerate. The protein operates within carbohydrate degradation; glycolysis; pyruvate from D-glyceraldehyde 3-phosphate: step 3/5. In terms of biological role, catalyzes the interconversion of 2-phosphoglycerate and 3-phosphoglycerate. The protein is 2,3-bisphosphoglycerate-dependent phosphoglycerate mutase of Brucella melitensis biotype 2 (strain ATCC 23457).